Consider the following 219-residue polypeptide: Ribose-5-phosphate isomerase A (219 aa).

Residues threonine 28–threonine 31, aspartate 81–aspartate 84, and lysine 94–glycine 97 each bind substrate. Glutamate 103 serves as the catalytic Proton acceptor. Substrate is bound at residue lysine 121.

This sequence belongs to the ribose 5-phosphate isomerase family. Homodimer.

The catalysed reaction is aldehydo-D-ribose 5-phosphate = D-ribulose 5-phosphate. It functions in the pathway carbohydrate degradation; pentose phosphate pathway; D-ribose 5-phosphate from D-ribulose 5-phosphate (non-oxidative stage): step 1/1. Its function is as follows. Catalyzes the reversible conversion of ribose-5-phosphate to ribulose 5-phosphate. This Salmonella choleraesuis (strain SC-B67) protein is Ribose-5-phosphate isomerase A.